Here is a 274-residue protein sequence, read N- to C-terminus: NADH-ubiquinone oxidoreductase chain 2 (274 aa).

8 helical membrane-spanning segments follow: residues 28-48 (MIIM…FWFP), 54-74 (LTWM…LMLI), 79-99 (IKYL…IGGL), 107-127 (LMAF…MFSE), 128-148 (SIWL…TFMF), 171-191 (FTLF…GFLP), 206-226 (FLLT…LRIC), and 254-274 (LIMT…YFMF).

The protein belongs to the complex I subunit 2 family.

It is found in the mitochondrion inner membrane. It carries out the reaction a ubiquinone + NADH + 5 H(+)(in) = a ubiquinol + NAD(+) + 4 H(+)(out). In terms of biological role, core subunit of the mitochondrial membrane respiratory chain NADH dehydrogenase (Complex I) that is believed to belong to the minimal assembly required for catalysis. Complex I functions in the transfer of electrons from NADH to the respiratory chain. The immediate electron acceptor for the enzyme is believed to be ubiquinone. The sequence is that of NADH-ubiquinone oxidoreductase chain 2 (mt:ND2) from Drosophila sechellia (Fruit fly).